Reading from the N-terminus, the 579-residue chain is L-ascorbate oxidase (579 aa).

A signal peptide spans 1-30 (MLQMGKAREPNFLILFFFGLILAFGISSEG). 2 Plastocyanin-like domains span residues 33 to 152 (IRHY…LIVD) and 164 to 330 (DGEI…NYLP). 3 disulfides stabilise this stretch: Cys-49–Cys-231, Cys-111–Cys-568, and Cys-210–Cys-223. The Cu cation site is built by His-90 and His-92. Asn-122 carries N-linked (GlcNAc...) asparagine glycosylation. The Cu cation site is built by His-134 and His-136. Residues Asn-355 and Asn-470 are each glycosylated (N-linked (GlcNAc...) asparagine). A Plastocyanin-like 3 domain is found at 374 to 553 (NRRIFLLNTQ…HMGMGVVFAE (180 aa)). Residues His-475, His-478, His-480, His-536, Cys-537, His-538, His-542, and Met-547 each contribute to the Cu cation site.

This sequence belongs to the multicopper oxidase family. As to quaternary structure, dimer. Cu cation serves as cofactor.

The protein resides in the secreted. The catalysed reaction is 4 L-ascorbate + O2 = 4 monodehydro-L-ascorbate radical + 2 H2O. In terms of biological role, may be involved in a redox system involving ascorbic acid. This chain is L-ascorbate oxidase (AAO), found in Cucurbita maxima (Pumpkin).